We begin with the raw amino-acid sequence, 499 residues long: Tetrathionate hydrolase (499 aa).

The signal sequence occupies residues 1–32 (MPSIVRNHGPHNKILLSALLLALFGWVPLASA).

The protein belongs to the tetrathionate hydrolase family. Homodimer.

Its subcellular location is the cell membrane. The catalysed reaction is tetrathionate + H2O = sulfur + thiosulfate + sulfate + H(+). Catalyzes the hydrolysis of tetrathionate to generate elemental sulfur, thiosulfate and sulfate. The protein is Tetrathionate hydrolase of Acidithiobacillus ferrooxidans (strain ATCC 23270 / DSM 14882 / CIP 104768 / NCIMB 8455) (Ferrobacillus ferrooxidans (strain ATCC 23270)).